A 151-amino-acid polypeptide reads, in one-letter code: 3-dehydroquinate dehydratase (151 aa).

The Proton acceptor role is filled by Tyr24. Substrate-binding residues include Asn76, His82, and Asp89. His102 serves as the catalytic Proton donor. Substrate-binding positions include 103–104 and Arg113; that span reads VS.

The protein belongs to the type-II 3-dehydroquinase family. Homododecamer.

It carries out the reaction 3-dehydroquinate = 3-dehydroshikimate + H2O. It participates in metabolic intermediate biosynthesis; chorismate biosynthesis; chorismate from D-erythrose 4-phosphate and phosphoenolpyruvate: step 3/7. Catalyzes a trans-dehydration via an enolate intermediate. The chain is 3-dehydroquinate dehydratase from Rhodopseudomonas palustris (strain BisA53).